We begin with the raw amino-acid sequence, 270 residues long: 4-hydroxy-tetrahydrodipicolinate reductase (270 aa).

Residues 11-16 (GAGGRM) and glutamate 37 contribute to the NAD(+) site. Arginine 38 lines the NADP(+) pocket. NAD(+) is bound by residues 101 to 103 (GTT) and 125 to 128 (APNM). The Proton donor/acceptor role is filled by histidine 158. Histidine 159 is a (S)-2,3,4,5-tetrahydrodipicolinate binding site. Lysine 162 (proton donor) is an active-site residue. 168 to 169 (GT) is a (S)-2,3,4,5-tetrahydrodipicolinate binding site.

This sequence belongs to the DapB family.

It is found in the cytoplasm. The enzyme catalyses (S)-2,3,4,5-tetrahydrodipicolinate + NAD(+) + H2O = (2S,4S)-4-hydroxy-2,3,4,5-tetrahydrodipicolinate + NADH + H(+). It catalyses the reaction (S)-2,3,4,5-tetrahydrodipicolinate + NADP(+) + H2O = (2S,4S)-4-hydroxy-2,3,4,5-tetrahydrodipicolinate + NADPH + H(+). The protein operates within amino-acid biosynthesis; L-lysine biosynthesis via DAP pathway; (S)-tetrahydrodipicolinate from L-aspartate: step 4/4. In terms of biological role, catalyzes the conversion of 4-hydroxy-tetrahydrodipicolinate (HTPA) to tetrahydrodipicolinate. This chain is 4-hydroxy-tetrahydrodipicolinate reductase, found in Shewanella putrefaciens (strain CN-32 / ATCC BAA-453).